The following is a 116-amino-acid chain: Ribonuclease P protein component 2 (116 aa).

The protein belongs to the eukaryotic/archaeal RNase P protein component 2 family. In terms of assembly, consists of a catalytic RNA component and at least 4-5 protein subunits.

It is found in the cytoplasm. The enzyme catalyses Endonucleolytic cleavage of RNA, removing 5'-extranucleotides from tRNA precursor.. In terms of biological role, part of ribonuclease P, a protein complex that generates mature tRNA molecules by cleaving their 5'-ends. The protein is Ribonuclease P protein component 2 of Methanosarcina mazei (strain ATCC BAA-159 / DSM 3647 / Goe1 / Go1 / JCM 11833 / OCM 88) (Methanosarcina frisia).